Consider the following 141-residue polypeptide: Hemoglobin subunit alpha (141 aa).

A Globin domain is found at 1 to 141; the sequence is VLSPADKSNV…VSTVLTSKYR (141 aa). At Ser-3 the chain carries Phosphoserine. 2 positions are modified to N6-succinyllysine: Lys-7 and Lys-11. Lys-16 carries the post-translational modification N6-acetyllysine; alternate. Residue Lys-16 is modified to N6-succinyllysine; alternate. Tyr-24 carries the phosphotyrosine modification. Position 35 is a phosphoserine (Ser-35). Position 40 is an N6-succinyllysine (Lys-40). Ser-49 is subject to Phosphoserine. His-58 is a binding site for O2. His-87 lines the heme b pocket. Ser-102 is subject to Phosphoserine. At Thr-108 the chain carries Phosphothreonine. A phosphoserine mark is found at Ser-124 and Ser-131. Thr-134 and Thr-137 each carry phosphothreonine. Position 138 is a phosphoserine (Ser-138).

It belongs to the globin family. In terms of assembly, heterotetramer of two alpha chains and two beta chains. As to expression, red blood cells.

Its function is as follows. Involved in oxygen transport from the lung to the various peripheral tissues. Functionally, hemopressin acts as an antagonist peptide of the cannabinoid receptor CNR1. Hemopressin-binding efficiently blocks cannabinoid receptor CNR1 and subsequent signaling. The polypeptide is Hemoglobin subunit alpha (HBA) (Leontocebus fuscicollis (Brown-mantled tamarin)).